Reading from the N-terminus, the 335-residue chain is DNA polymerase beta (335 aa).

A Glycyl lysine isopeptide (Lys-Gly) (interchain with G-Cter in ubiquitin) cross-link involves residue lysine 41. Lysine 60 contacts K(+). Lysine 60 lines the Na(+) pocket. Lysine 61 is covalently cross-linked (Glycyl lysine isopeptide (Lys-Gly) (interchain with G-Cter in ubiquitin)). K(+) contacts are provided by leucine 62 and valine 65. The Na(+) site is built by leucine 62 and valine 65. The Nucleophile; Schiff-base intermediate with DNA; for 5'-dRP lyase activity role is filled by lysine 72. Position 72 is an N6-acetyllysine (lysine 72). Lysine 81 is covalently cross-linked (Glycyl lysine isopeptide (Lys-Gly) (interchain with G-Cter in ubiquitin)). At arginine 83 the chain carries Omega-N-methylarginine; by PRMT6. K(+) contacts are provided by threonine 101, valine 103, and isoleucine 106. Residues threonine 101, valine 103, and isoleucine 106 each coordinate Na(+). DATP is bound at residue arginine 149. Arginine 149 contacts dCTP. Residue arginine 149 coordinates dGTP. Arginine 149 provides a ligand contact to dTTP. Residue arginine 152 is modified to Omega-N-methylarginine; by PRMT6. Positions 180, 183, 189, and 190 each coordinate dATP. Serine 180, arginine 183, glycine 189, and aspartate 190 together coordinate dCTP. Residues serine 180, arginine 183, glycine 189, aspartate 190, and aspartate 192 each coordinate dGTP. 4 residues coordinate dTTP: serine 180, arginine 183, glycine 189, and aspartate 190. The tract at residues 183 to 192 is DNA-binding; sequence RGAESSGDMD. Mg(2+) contacts are provided by aspartate 190, aspartate 192, and aspartate 256.

The protein belongs to the DNA polymerase type-X family. Monomer. Binds single-stranded DNA (ssDNA). Interacts with APEX1, LIG1, LIG3, FEN1, PCNA and XRCC1. Interacts with HUWE1/ARF-BP1, STUB1/CHIP and USP47. Interacts with FAM168A. Mg(2+) is required as a cofactor. Methylation by PRMT6 stimulates the polymerase activity by enhancing DNA binding and processivity. In terms of processing, ubiquitinated at Lys-41, Lys-61 and Lys-81: monoubiquitinated by HUWE1/ARF-BP1. Monoubiquitinated protein is then the target of STUB1/CHIP, which catalyzes polyubiquitination from monoubiquitin, leading to degradation by the proteasome. USP47 mediates the deubiquitination of monoubiquitinated protein, preventing polyubiquitination by STUB1/CHIP and its subsequent degradation.

It localises to the nucleus. It is found in the cytoplasm. The enzyme catalyses DNA(n) + a 2'-deoxyribonucleoside 5'-triphosphate = DNA(n+1) + diphosphate. It carries out the reaction a 5'-end 2'-deoxyribose-2'-deoxyribonucleotide-DNA = (2E,4S)-4-hydroxypenten-2-al-5-phosphate + a 5'-end 5'-phospho-2'-deoxyribonucleoside-DNA + H(+). The catalysed reaction is 2'-deoxyribonucleotide-(2'-deoxyribose 5'-phosphate)-2'-deoxyribonucleotide-DNA = a 3'-end 2'-deoxyribonucleotide-(2,3-dehydro-2,3-deoxyribose 5'-phosphate)-DNA + a 5'-end 5'-phospho-2'-deoxyribonucleoside-DNA + H(+). Its function is as follows. Repair polymerase that plays a key role in base-excision repair. During this process, the damaged base is excised by specific DNA glycosylases, the DNA backbone is nicked at the abasic site by an apurinic/apyrimidic (AP) endonuclease, and POLB removes 5'-deoxyribose-phosphate from the preincised AP site acting as a 5'-deoxyribose-phosphate lyase (5'-dRP lyase); through its DNA polymerase activity, it adds one nucleotide to the 3' end of the arising single-nucleotide gap. Conducts 'gap-filling' DNA synthesis in a stepwise distributive fashion rather than in a processive fashion as for other DNA polymerases. It is also able to cleave sugar-phosphate bonds 3' to an intact AP site, acting as an AP lyase. This is DNA polymerase beta (POLB) from Homo sapiens (Human).